A 289-amino-acid polypeptide reads, in one-letter code: Protein SET (289 aa).

The tract at residues 1-45 (MAPKRQSAILPQPKKPRPAAAPKLEDKSASPGLPKGEKEQQEAIE) is disordered. Ala-2 is modified (n,N,N-trimethylalanine; by NTM1). Residue Ser-7 is modified to Phosphoserine. Pro-11 carries the post-translational modification N6-acetyllysine. Phosphoserine is present on Lys-15. The residue at position 23 (Lys-23) is an N6-acetyllysine. Residue Lys-23 is modified to Phosphothreonine. Ser-28 carries the post-translational modification Phosphoserine. A dimerization region spans residues 31-77 (PGLPKGEKEQQEAIEHIDEVQNEIDRLNEQASEEILKVEQKYNKLRQ). Residues 35–45 (KGEKEQQEAIE) are compositionally biased toward basic and acidic residues. Ser-62 is subject to Phosphoserine. The residue at position 67 (Lys-67) is an N6-acetyllysine. The earmuff domain stretch occupies residues 78 to 224 (PFFQKRSELI…ELGEVIKDDI (147 aa)). Tyr-145 carries the post-translational modification Phosphotyrosine. Residue Lys-149 is modified to N6-acetyllysine. Residue Lys-153 forms a Glycyl lysine isopeptide (Lys-Gly) (interchain with G-Cter in ubiquitin) linkage. 2 disordered regions span residues 157-206 (LNES…TWFT) and 235-289 (PDMD…GEDD). The span at 168–180 (TEIKWKSGKDLTK) shows a compositional bias: basic and acidic residues. Lys-171 is modified (N6-acetyllysine). Acidic residues predominate over residues 236 to 289 (DMDDEEGEAEDDDDDDEEEEGLEDIDEEGDEDEGEEDDDEDEGEEGEEDEGEDD).

It belongs to the nucleosome assembly protein (NAP) family. In terms of assembly, headphone-shaped homodimer. Isoform 1 and isoform 2 interact directly with each other and with ANP32A within the tripartite INHAT (inhibitor of acetyltransferases) complex. Isoform 1 and isoform 2 interact also with histones. Isoform 2 is a omponent of the SET complex, composed of at least ANP32A, APEX1, HMGB2, NME1, SET and TREX1, but not NME2 or TREX2. Within this complex, directly interacts with ANP32A, NME1, HMGB2 and TREX1; the interaction with ANP32A is enhanced after cleavage. Interacts with APBB1, CHTOP, SETBP1, SGO1. In terms of processing, some glutamate residues are glycylated by TTLL8. This modification occurs exclusively on glutamate residues and results in a glycine chain on the gamma-carboxyl group. N-terminus of isoform 1 is methylated by METTL11A/NTM1. Mainly trimethylated. Post-translationally, cleaved after Lys-176 by GZMA. The cleavage inhibits its nucleosome assembly activity and disrupts the inhibition on NME1.

It localises to the cytoplasm. The protein resides in the cytosol. It is found in the endoplasmic reticulum. The protein localises to the nucleus. Its subcellular location is the nucleoplasm. Multitasking protein, involved in apoptosis, transcription, nucleosome assembly and histone chaperoning. Isoform 2 anti-apoptotic activity is mediated by inhibition of the GZMA-activated DNase, NME1. In the course of cytotoxic T-lymphocyte (CTL)-induced apoptosis, GZMA cleaves SET, disrupting its binding to NME1 and releasing NME1 inhibition. Isoform 1 and isoform 2 are potent inhibitors of protein phosphatase 2A. Isoform 1 and isoform 2 inhibit EP300/CREBBP and PCAF-mediated acetylation of histones (HAT) and nucleosomes, most probably by masking the accessibility of lysines of histones to the acetylases. The predominant target for inhibition is histone H4. HAT inhibition leads to silencing of HAT-dependent transcription and prevents active demethylation of DNA. Both isoforms stimulate DNA replication of the adenovirus genome complexed with viral core proteins; however, isoform 2 specific activity is higher. The sequence is that of Protein SET (Set) from Mus musculus (Mouse).